Here is a 305-residue protein sequence, read N- to C-terminus: Homoserine kinase (305 aa).

P90–S100 is an ATP binding site.

It belongs to the GHMP kinase family. Homoserine kinase subfamily.

It localises to the cytoplasm. The catalysed reaction is L-homoserine + ATP = O-phospho-L-homoserine + ADP + H(+). It functions in the pathway amino-acid biosynthesis; L-threonine biosynthesis; L-threonine from L-aspartate: step 4/5. Catalyzes the ATP-dependent phosphorylation of L-homoserine to L-homoserine phosphate. The chain is Homoserine kinase from Staphylococcus haemolyticus (strain JCSC1435).